The chain runs to 128 residues: Small ribosomal subunit protein uS14m (128 aa).

The protein belongs to the universal ribosomal protein uS14 family. In terms of assembly, component of the mitochondrial ribosome small subunit (28S) which comprises a 12S rRNA and about 30 distinct proteins. Interacts with LIAT1.

It is found in the mitochondrion. This is Small ribosomal subunit protein uS14m (MRPS14) from Bos taurus (Bovine).